The sequence spans 427 residues: Dihydroorotase (427 aa).

2 residues coordinate Zn(2+): His60 and His62. Substrate is bound by residues 62 to 64 and Asn94; that span reads HLR. 3 residues coordinate Zn(2+): Asp152, His179, and His232. Asn278 serves as a coordination point for substrate. Zn(2+) is bound at residue Asp305. Residue Asp305 is part of the active site. Residues His309 and 323-324 contribute to the substrate site; that span reads FG.

This sequence belongs to the metallo-dependent hydrolases superfamily. DHOase family. Class I DHOase subfamily. Requires Zn(2+) as cofactor.

It catalyses the reaction (S)-dihydroorotate + H2O = N-carbamoyl-L-aspartate + H(+). The protein operates within pyrimidine metabolism; UMP biosynthesis via de novo pathway; (S)-dihydroorotate from bicarbonate: step 3/3. Catalyzes the reversible cyclization of carbamoyl aspartate to dihydroorotate. This Bacillus caldolyticus protein is Dihydroorotase.